A 242-amino-acid polypeptide reads, in one-letter code: 3-dehydroquinate dehydratase (242 aa).

Residues 39 to 41 and Arg-73 contribute to the 3-dehydroquinate site; that span reads EVR. His-135 (proton donor/acceptor) is an active-site residue. The active-site Schiff-base intermediate with substrate is Lys-162. Arg-203 and Gln-228 together coordinate 3-dehydroquinate.

It belongs to the type-I 3-dehydroquinase family. As to quaternary structure, homodimer.

The catalysed reaction is 3-dehydroquinate = 3-dehydroshikimate + H2O. Its pathway is metabolic intermediate biosynthesis; chorismate biosynthesis; chorismate from D-erythrose 4-phosphate and phosphoenolpyruvate: step 3/7. Involved in the third step of the chorismate pathway, which leads to the biosynthesis of aromatic amino acids. Catalyzes the cis-dehydration of 3-dehydroquinate (DHQ) and introduces the first double bond of the aromatic ring to yield 3-dehydroshikimate. The protein is 3-dehydroquinate dehydratase of Methanosarcina acetivorans (strain ATCC 35395 / DSM 2834 / JCM 12185 / C2A).